Here is a 304-residue protein sequence, read N- to C-terminus: Nod factor export ATP-binding protein I (304 aa).

An ABC transporter domain is found at 6 to 236 (IDFQQVEKRY…EIGCDVIEIY (231 aa)). 38 to 45 (GPNGAGKT) is an ATP binding site.

It belongs to the ABC transporter superfamily. Lipooligosaccharide exporter (TC 3.A.1.102) family. The complex is composed of two ATP-binding proteins (NodI) and two transmembrane proteins (NodJ).

It is found in the cell inner membrane. In terms of biological role, part of the ABC transporter complex NodIJ involved in the export of the nodulation factors (Nod factors), the bacterial signal molecules that induce symbiosis and subsequent nodulation induction. Nod factors are LCO (lipo-chitin oligosaccharide), a modified beta-1,4-linked N-acetylglucosamine oligosaccharide. This subunit is responsible for energy coupling to the transport system. The polypeptide is Nod factor export ATP-binding protein I (Burkholderia pseudomallei (strain K96243)).